The following is a 598-amino-acid chain: Aspartate--tRNA(Asp/Asn) ligase (598 aa).

Glu177 provides a ligand contact to L-aspartate. The interval 201-204 is aspartate; it reads QLFK. Position 223 (Arg223) interacts with L-aspartate. ATP is bound by residues 223–225 and Gln232; that span reads RDE. His456 is a binding site for L-aspartate. Glu493 contacts ATP. Arg500 is an L-aspartate binding site. 545 to 548 serves as a coordination point for ATP; the sequence is GVDR.

Belongs to the class-II aminoacyl-tRNA synthetase family. Type 1 subfamily. In terms of assembly, homodimer.

The protein localises to the cytoplasm. The catalysed reaction is tRNA(Asx) + L-aspartate + ATP = L-aspartyl-tRNA(Asx) + AMP + diphosphate. Functionally, aspartyl-tRNA synthetase with relaxed tRNA specificity since it is able to aspartylate not only its cognate tRNA(Asp) but also tRNA(Asn). Reaction proceeds in two steps: L-aspartate is first activated by ATP to form Asp-AMP and then transferred to the acceptor end of tRNA(Asp/Asn). The sequence is that of Aspartate--tRNA(Asp/Asn) ligase from Prochlorococcus marinus subsp. pastoris (strain CCMP1986 / NIES-2087 / MED4).